We begin with the raw amino-acid sequence, 881 residues long: MKYMGLNDIRESYLSFFEKKEHLRLPSFSLIPKNDKSLLLINAGMAPLKPYFTGLQTPPKTRVTTCQKCIRTGDIENIGKTSRHGTFFEMLGNFSFGDYFKEEVISWAWEYITEVLKFPKDRIYITIYLDDDEAFKIWTEKAGVDPSRIFRFGKEDNFWEHGSGPCGPCSEMHFDRREKPDLIKTREKFIELQDKDEVIEFWNLVFTQFDKDEDGNYNKLKNPNIDTGMGLERIATIMQNTDSIFEIDTIREVLDAVCKICNVKYGENHKNDVSLRIITDHIRSVTFMISDGILPSNEGRGYVLRRLLRRAARHGKTLGIEKTFLCGLCDVVIKNSKGAYKELEEKQDYIKNVIEIEEKRFDETLDSGMEILKNYIDELSLENKKVMSGEKAFRLYDTYGFPVELTQEILEEKGIEIDMNDFHSEMEKQKNRARDAREESNYMGKEIKLIDKLPESVTTKFVGYNSTSTDSKVEVLIKDDEFVSTINEGESGIVVTEETPFYAEMGGQIGDKGIIFGKNGEAKVVDCKNNISGKIIHIVQVVKGSIEKNENVTLEVNYKKRKDICKNHTATHMLQAALKKVVGSHINQSGSYVDNERLRFDFTHFTALTDEEILKVEAMVNDEIMAAYDVKTDIMSVDEAKKTGAMALFDEKYGNRVRVVSVGDFSRELCGGTHVNNSGEIGLFKIISESGVAAGIRRIEAITGKEAVRYTEENDNLIRNIEQELKCSKKDILNKINQYHSELKEKEKEINILKGKLASGFEENILSSVKEVSGVKYVASEVKGISGDTLRELCDKVRNKIDDGMVLLASKDGEKVQFVAMASKNAVKKGVHCGKVIKEVASMCGGNGGGRPDMAQAGGKDGEKLETALKEVGNIMEKLVK.

Residues H568, H572, C670, and H674 each contribute to the Zn(2+) site.

The protein belongs to the class-II aminoacyl-tRNA synthetase family. Zn(2+) is required as a cofactor.

Its subcellular location is the cytoplasm. It catalyses the reaction tRNA(Ala) + L-alanine + ATP = L-alanyl-tRNA(Ala) + AMP + diphosphate. In terms of biological role, catalyzes the attachment of alanine to tRNA(Ala) in a two-step reaction: alanine is first activated by ATP to form Ala-AMP and then transferred to the acceptor end of tRNA(Ala). Also edits incorrectly charged Ser-tRNA(Ala) and Gly-tRNA(Ala) via its editing domain. The polypeptide is Alanine--tRNA ligase (Clostridium acetobutylicum (strain ATCC 824 / DSM 792 / JCM 1419 / IAM 19013 / LMG 5710 / NBRC 13948 / NRRL B-527 / VKM B-1787 / 2291 / W)).